The chain runs to 498 residues: Putative ABC transporter ATP-binding protein MM_2387 (498 aa).

ABC transporter domains lie at 2 to 242 (IELR…TSKS) and 258 to 490 (ISIK…VEEK). ATP-binding positions include 36–43 (GHSAAGKT) and 290–297 (GENGSGKT).

This sequence belongs to the ABC transporter superfamily.

The protein resides in the cell membrane. Probably part of an ABC transporter complex. Responsible for energy coupling to the transport system. This chain is Putative ABC transporter ATP-binding protein MM_2387, found in Methanosarcina mazei (strain ATCC BAA-159 / DSM 3647 / Goe1 / Go1 / JCM 11833 / OCM 88) (Methanosarcina frisia).